Reading from the N-terminus, the 712-residue chain is UvrABC system protein B (712 aa).

Residues 35 to 421 (RRVQAGEKDV…SDGAVEQIIR (387 aa)) enclose the Helicase ATP-binding domain. Residue 48–55 (GATGTGKS) coordinates ATP. The short motif at 101 to 124 (YYDYYQPEAYVPQSDTYIEKDSSI) is the Beta-hairpin element. The region spanning 438–604 (QIDDLVHEIR…PLRKKINDIV (167 aa)) is the Helicase C-terminal domain. Positions 625 to 655 (TKEGKGAKAPVPALGGQKTGGAKAARGRAKE) are disordered. One can recognise a UVR domain in the interval 667–702 (AEQIEDLTTRMRAAAADLQFEIAARLRDEVSEMKKE).

It belongs to the UvrB family. As to quaternary structure, forms a heterotetramer with UvrA during the search for lesions. Interacts with UvrC in an incision complex.

The protein localises to the cytoplasm. Functionally, the UvrABC repair system catalyzes the recognition and processing of DNA lesions. A damage recognition complex composed of 2 UvrA and 2 UvrB subunits scans DNA for abnormalities. Upon binding of the UvrA(2)B(2) complex to a putative damaged site, the DNA wraps around one UvrB monomer. DNA wrap is dependent on ATP binding by UvrB and probably causes local melting of the DNA helix, facilitating insertion of UvrB beta-hairpin between the DNA strands. Then UvrB probes one DNA strand for the presence of a lesion. If a lesion is found the UvrA subunits dissociate and the UvrB-DNA preincision complex is formed. This complex is subsequently bound by UvrC and the second UvrB is released. If no lesion is found, the DNA wraps around the other UvrB subunit that will check the other stand for damage. This is UvrABC system protein B from Streptomyces coelicolor (strain ATCC BAA-471 / A3(2) / M145).